The following is a 122-amino-acid chain: Histone H2B type 2-K1 (122 aa).

The tract at residues Met1–Arg30 is disordered. Residues Gly20–Arg30 are compositionally biased toward basic residues. Position 31 is an N6-(2-hydroxyisobutyryl)lysine; alternate (Lys31). At Lys31 the chain carries N6-(beta-hydroxybutyryl)lysine; alternate. Lys31 carries the N6-crotonyllysine; alternate modification. Position 31 is an N6-glutaryllysine; alternate (Lys31). Lys31 bears the N6-succinyllysine; alternate mark. A Glycyl lysine isopeptide (Lys-Gly) (interchain with G-Cter in ubiquitin); alternate cross-link involves residue Lys31. Ser33 carries the post-translational modification Phosphoserine. An N6-(2-hydroxyisobutyryl)lysine; alternate mark is found at Lys40, Lys43, and Lys54. N6-glutaryllysine; alternate is present on residues Lys40 and Lys43. Lys40 is modified (N6-lactoyllysine; alternate). N6-methyllysine is present on Lys43. Lys43 is modified (N6-methyllysine; alternate). An N6,N6-dimethyllysine modification is found at Lys54. N6,N6-dimethyllysine; alternate is present on Lys54. Residue Arg76 is modified to Dimethylated arginine. Residue Ser81 is modified to Phosphoserine. 2 positions are modified to omega-N-methylarginine: Arg83 and Arg89. Lys105 is subject to N6-(2-hydroxyisobutyryl)lysine; alternate. Lys105 is modified (N6-glutaryllysine; alternate). At Lys105 the chain carries N6-lactoyllysine; alternate. The residue at position 105 (Lys105) is an N6-methyllysine. Residue Lys105 is modified to N6-methyllysine; alternate. A glycan (O-linked (GlcNAc) serine) is linked at Ser109. At Thr112 the chain carries Phosphothreonine. 2 positions are modified to N6-(2-hydroxyisobutyryl)lysine; alternate: Lys113 and Lys117. Residues Lys113 and Lys117 each carry the N6-(beta-hydroxybutyryl)lysine; alternate modification. N6-glutaryllysine; alternate is present on residues Lys113 and Lys117. Residues Lys113 and Lys117 each carry the N6-succinyllysine; alternate modification. At Lys113 the chain carries N6-lactoyllysine; alternate. Lys113 is subject to N6-malonyllysine; alternate. At Lys113 the chain carries N6-methylated lysine; alternate. Lys117 is covalently cross-linked (Glycyl lysine isopeptide (Lys-Gly) (interchain with G-Cter in ubiquitin); alternate).

Belongs to the histone H2B family. In terms of assembly, the nucleosome is a histone octamer containing two molecules each of H2A, H2B, H3 and H4 assembled in one H3-H4 heterotetramer and two H2A-H2B heterodimers. The octamer wraps approximately 147 bp of DNA.

It localises to the chromosome. It is found in the nucleus. In terms of biological role, core component of nucleosome. Nucleosomes wrap and compact DNA into chromatin, limiting DNA accessibility to the cellular machineries which require DNA as a template. Histones thereby play a central role in transcription regulation, DNA repair, DNA replication and chromosomal stability. DNA accessibility is regulated via a complex set of post-translational modifications of histones, also called histone code, and nucleosome remodeling. This chain is Histone H2B type 2-K1, found in Homo sapiens (Human).